Reading from the N-terminus, the 828-residue chain is Beta-galactosidase (828 aa).

The first 20 residues, 1 to 20 (MKMKQFNLLSLFLILITSFG), serve as a signal peptide directing secretion. Asn23 and Asn153 each carry an N-linked (GlcNAc...) asparagine glycan. Residue Glu183 is the Proton donor of the active site. Residue Glu252 is the Nucleophile of the active site. N-linked (GlcNAc...) asparagine glycans are attached at residues Asn253, Asn350, Asn379, Asn492, Asn667, Asn799, and Asn803. In terms of domain architecture, SUEL-type lectin spans 742 to 828 (AHEHNKVELS…PKRLFVEVEC (87 aa)).

This sequence belongs to the glycosyl hydrolase 35 family.

It localises to the secreted. The protein resides in the extracellular space. The protein localises to the apoplast. It carries out the reaction Hydrolysis of terminal non-reducing beta-D-galactose residues in beta-D-galactosides.. This chain is Beta-galactosidase, found in Brassica oleracea (Wild cabbage).